The following is a 493-amino-acid chain: Proline--tRNA ligase (493 aa).

This sequence belongs to the class-II aminoacyl-tRNA synthetase family. ProS type 3 subfamily. In terms of assembly, homodimer.

It localises to the cytoplasm. It catalyses the reaction tRNA(Pro) + L-proline + ATP = L-prolyl-tRNA(Pro) + AMP + diphosphate. In terms of biological role, catalyzes the attachment of proline to tRNA(Pro) in a two-step reaction: proline is first activated by ATP to form Pro-AMP and then transferred to the acceptor end of tRNA(Pro). The polypeptide is Proline--tRNA ligase (Azobacteroides pseudotrichonymphae genomovar. CFP2).